The primary structure comprises 311 residues: tRNA dimethylallyltransferase (311 aa).

11-18 provides a ligand contact to ATP; it reads GPTASGKS. Residue 13 to 18 coordinates substrate; sequence TASGKS. Interaction with substrate tRNA stretches follow at residues 36-39 and 160-164; these read DSMQ and QRLIR.

The protein belongs to the IPP transferase family. Monomer. Requires Mg(2+) as cofactor.

It catalyses the reaction adenosine(37) in tRNA + dimethylallyl diphosphate = N(6)-dimethylallyladenosine(37) in tRNA + diphosphate. Catalyzes the transfer of a dimethylallyl group onto the adenine at position 37 in tRNAs that read codons beginning with uridine, leading to the formation of N6-(dimethylallyl)adenosine (i(6)A). This is tRNA dimethylallyltransferase from Rickettsia prowazekii (strain Madrid E).